A 158-amino-acid chain; its full sequence is Ribosome maturation factor RimP (158 aa).

This sequence belongs to the RimP family.

It localises to the cytoplasm. Required for maturation of 30S ribosomal subunits. In Pediococcus pentosaceus (strain ATCC 25745 / CCUG 21536 / LMG 10740 / 183-1w), this protein is Ribosome maturation factor RimP.